The chain runs to 1158 residues: ATP-dependent helicase/deoxyribonuclease subunit B (1158 aa).

8 to 15 (GRAGTGKS) provides a ligand contact to ATP. [4Fe-4S] cluster-binding residues include cysteine 791, cysteine 1112, cysteine 1115, and cysteine 1121.

Belongs to the helicase family. AddB/RexB type 1 subfamily. In terms of assembly, heterodimer of AddA and AddB. Requires Mg(2+) as cofactor. [4Fe-4S] cluster is required as a cofactor.

Functionally, the heterodimer acts as both an ATP-dependent DNA helicase and an ATP-dependent, dual-direction single-stranded exonuclease. Recognizes the chi site generating a DNA molecule suitable for the initiation of homologous recombination. The AddB subunit has 5' -&gt; 3' nuclease activity but not helicase activity. This chain is ATP-dependent helicase/deoxyribonuclease subunit B, found in Clostridium perfringens (strain 13 / Type A).